A 366-amino-acid polypeptide reads, in one-letter code: sn-glycerol-3-phosphate import ATP-binding protein UgpC (366 aa).

An ABC transporter domain is found at 4–235 (VTLRNVRKTY…PASTFVASFI (232 aa)). 37 to 44 (GPSGCGKS) is an ATP binding site.

The protein belongs to the ABC transporter superfamily. sn-glycerol-3-phosphate importer (TC 3.A.1.1.3) family. In terms of assembly, the complex is composed of two ATP-binding proteins (UgpC), two transmembrane proteins (UgpA and UgpE) and a solute-binding protein (UgpB).

It is found in the cell inner membrane. The catalysed reaction is sn-glycerol 3-phosphate(out) + ATP + H2O = sn-glycerol 3-phosphate(in) + ADP + phosphate + H(+). Part of the ABC transporter complex UgpBAEC involved in sn-glycerol-3-phosphate (G3P) import. Responsible for energy coupling to the transport system. In Rhodopseudomonas palustris (strain BisB18), this protein is sn-glycerol-3-phosphate import ATP-binding protein UgpC.